The chain runs to 567 residues: Type 2 DNA topoisomerase 6 subunit B (567 aa).

ATP-binding positions include N46, D78, 99-100 (TK), 109-116 (GQQGIGIS), and K472.

The protein belongs to the TOP6B family. As to quaternary structure, homodimer. Heterotetramer of two Top6A and two Top6B chains.

The catalysed reaction is ATP-dependent breakage, passage and rejoining of double-stranded DNA.. In terms of biological role, relaxes both positive and negative superturns and exhibits a strong decatenase activity. This chain is Type 2 DNA topoisomerase 6 subunit B, found in Thermococcus kodakarensis (strain ATCC BAA-918 / JCM 12380 / KOD1) (Pyrococcus kodakaraensis (strain KOD1)).